Here is a 544-residue protein sequence, read N- to C-terminus: Chaperonin GroEL 1 (544 aa).

Residues 29–32 (TLGP), 86–90 (DGTTT), Gly-413, 479–481 (NAA), and Asp-495 each bind ATP.

This sequence belongs to the chaperonin (HSP60) family. Forms a cylinder of 14 subunits composed of two heptameric rings stacked back-to-back. Interacts with the co-chaperonin GroES.

The protein resides in the cytoplasm. The enzyme catalyses ATP + H2O + a folded polypeptide = ADP + phosphate + an unfolded polypeptide.. Functionally, together with its co-chaperonin GroES, plays an essential role in assisting protein folding. The GroEL-GroES system forms a nano-cage that allows encapsulation of the non-native substrate proteins and provides a physical environment optimized to promote and accelerate protein folding. In Synechococcus sp. (strain CC9902), this protein is Chaperonin GroEL 1.